Here is a 378-residue protein sequence, read N- to C-terminus: B3 domain-containing protein Os03g0622200 (378 aa).

The segment at residues 29 to 124 is a DNA-binding region (TF-B3 1); it reads SKHFLKHMVG…SFDVLIFDPS (96 aa). The segment at 140 to 159 is disordered; the sequence is GRAENSAGAEQGGRNGRRTP. Residues 256–370 constitute a DNA-binding region (TF-B3 2); the sequence is FVQVIHSSHV…TMTVHVLRRV (115 aa).

It localises to the nucleus. This chain is B3 domain-containing protein Os03g0622200, found in Oryza sativa subsp. japonica (Rice).